We begin with the raw amino-acid sequence, 651 residues long: Protein numb homolog (651 aa).

Residues 33 to 193 (RTGKCSFPVK…ASRTTFTREG (161 aa)) form the PID domain. A Phosphothreonine; by AAK1 modification is found at T102. S194 carries the post-translational modification Phosphoserine. The interval 228 to 255 (SSVAPGNTAPSPSSPTSPTSDATTSLEM) is disordered. Residues 235–252 (TAPSPSSPTSPTSDATTS) are compositionally biased toward low complexity. A Phosphothreonine modification is found at T243. Residue S244 is modified to Phosphoserine. Residues S276 and S295 each carry the phosphoserine; by CaMK1 modification. 2 disordered regions span residues 419 to 483 (QSSG…SPFQ) and 623 to 651 (LENKSKQRTNPSPTNPFSSDLQKTFEIEL). S425 is subject to Phosphoserine. At T436 the chain carries Phosphothreonine. The segment covering 436–449 (TPSEADRWLEEVSK) has biased composition (basic and acidic residues). S438 carries the phosphoserine modification. A compositionally biased stretch (low complexity) spans 453–466 (AQQPQASAAPLQPV). A compositionally biased stretch (polar residues) spans 630–644 (RTNPSPTNPFSSDLQ). A Phosphoserine modification is found at S634.

In terms of assembly, interacts with SIAH1. Interacts with LNX. Interacts with CDH1. Interacts with TFAP2A and TFAP2B. Interacts with RALBP1 in a complex also containing EPN1 and TFAP2A during interphase and mitosis. Interacts with AAK1. May interact with DUOXA1. Post-translationally, phosphorylated on Ser-276 and Ser-295 by CaMK1. Isoform 1 and isoform 2 are ubiquitinated by LNX leading to their subsequent proteasomal degradation. Ubiquitinated; mediated by SIAH1 and leading to its subsequent proteasomal degradation.

It localises to the cell membrane. Its subcellular location is the endosome membrane. Its function is as follows. Regulates clathrin-mediated receptor endocytosis. Plays a role in the process of neurogenesis. Required throughout embryonic neurogenesis to maintain neural progenitor cells, also called radial glial cells (RGCs), by allowing their daughter cells to choose progenitor over neuronal cell fate. Not required for the proliferation of neural progenitor cells before the onset of neurogenesis. Also involved postnatally in the subventricular zone (SVZ) neurogenesis by regulating SVZ neuroblasts survival and ependymal wall integrity. May also mediate local repair of brain ventricular wall damage. The protein is Protein numb homolog of Homo sapiens (Human).